The chain runs to 75 residues: Protein SlyX homolog (75 aa).

Positions Lys-56–Tyr-75 are disordered.

The protein belongs to the SlyX family.

In Vibrio parahaemolyticus serotype O3:K6 (strain RIMD 2210633), this protein is Protein SlyX homolog.